A 280-amino-acid chain; its full sequence is 2,3,4,5-tetrahydropyridine-2,6-dicarboxylate N-succinyltransferase (280 aa).

Substrate contacts are provided by Arg-109 and Asp-146.

It belongs to the transferase hexapeptide repeat family. As to quaternary structure, homotrimer.

The protein resides in the cytoplasm. It catalyses the reaction (S)-2,3,4,5-tetrahydrodipicolinate + succinyl-CoA + H2O = (S)-2-succinylamino-6-oxoheptanedioate + CoA. It participates in amino-acid biosynthesis; L-lysine biosynthesis via DAP pathway; LL-2,6-diaminopimelate from (S)-tetrahydrodipicolinate (succinylase route): step 1/3. The polypeptide is 2,3,4,5-tetrahydropyridine-2,6-dicarboxylate N-succinyltransferase (Blochmanniella floridana).